A 249-amino-acid polypeptide reads, in one-letter code: Selenoprotein BthD (249 aa).

The tract at residues 1–22 is disordered; sequence MPPKRNKKAEAPIAERDAGEEL. Residues 8–19 show a composition bias toward basic and acidic residues; the sequence is KAEAPIAERDAG. Positions 34 to 37 form a cross-link, cysteinyl-selenocysteine (Cys-Sec); redox-active; that stretch reads CRSU. Residue U37 is a non-standard amino acid, selenocysteine. The segment at 122–249 is disordered; the sequence is QQESKEQTNT…EATAGAKRRR (128 aa). Phosphoserine is present on S147. The span at 175–198 shows a compositional bias: basic and acidic residues; sequence EQKSEEEPTQVDSKEAKQSKELVK. Positions 199–210 are enriched in basic residues; sequence TKRQPKAQKKQA.

Expressed in the developing salivary gland at late stages of embryogenesis. Also expressed in brain, neuroblast and wing disk.

It is found in the cytoplasm. Its subcellular location is the secreted. May be involved in a redox-related process. Required for survival and specifically for salivary gland morphogenesis. This chain is Selenoprotein BthD (BthD), found in Drosophila melanogaster (Fruit fly).